Here is a 216-residue protein sequence, read N- to C-terminus: Peptide methionine sulfoxide reductase MsrA (216 aa).

Residue Cys54 is part of the active site.

Belongs to the MsrA Met sulfoxide reductase family.

The enzyme catalyses L-methionyl-[protein] + [thioredoxin]-disulfide + H2O = L-methionyl-(S)-S-oxide-[protein] + [thioredoxin]-dithiol. The catalysed reaction is [thioredoxin]-disulfide + L-methionine + H2O = L-methionine (S)-S-oxide + [thioredoxin]-dithiol. In terms of biological role, has an important function as a repair enzyme for proteins that have been inactivated by oxidation. Catalyzes the reversible oxidation-reduction of methionine sulfoxide in proteins to methionine. The sequence is that of Peptide methionine sulfoxide reductase MsrA from Xylella fastidiosa (strain M12).